Here is a 706-residue protein sequence, read N- to C-terminus: Double-strand break repair protein MRE11 (706 aa).

Serine 2 is subject to N-acetylserine. Position 2 is a phosphoserine (serine 2). Residues aspartate 20, histidine 22, and aspartate 60 each coordinate Mn(2+). The interaction with NBN stretch occupies residues 87–117 (RPVQFEVISDQSVNFGFSKFPWVNYQDGNLN). A Mn(2+)-binding site is contributed by asparagine 128. Catalysis depends on histidine 129, which acts as the Proton donor. Mn(2+) contacts are provided by histidine 217, histidine 245, and histidine 247. Lysine 255 participates in a covalent cross-link: Glycyl lysine isopeptide (Lys-Gly) (interchain with G-Cter in SUMO2). At serine 275 the chain carries Phosphoserine. Residue lysine 282 forms a Glycyl lysine isopeptide (Lys-Gly) (interchain with G-Cter in UFM1) linkage. Lysine 339 participates in a covalent cross-link: Glycyl lysine isopeptide (Lys-Gly) (interchain with G-Cter in ubiquitin). Residues lysine 384 and lysine 468 each participate in a glycyl lysine isopeptide (Lys-Gly) (interchain with G-Cter in SUMO) cross-link. A Glycyl lysine isopeptide (Lys-Gly) (interchain with G-Cter in ubiquitin) cross-link involves residue lysine 481. Basic and acidic residues predominate over residues 505-514 (FRESRQRNTN). The interval 505-706 (FRESRQRNTN…SSSCPRRNRR (202 aa)) is disordered. A compositionally biased stretch (polar residues) spans 531–541 (RSQSETSTSAF). The span at 569 to 579 (GRGRGRGRRGA) shows a compositional bias: basic residues. Asymmetric dimethylarginine occurs at positions 570, 572, 574, 576, 577, 580, 587, 592, and 594. The GAR motif lies at 570 to 594 (RGRGRGRRGARGQSSAPRGGSQRGR). Positions 580-589 (RGQSSAPRGG) are enriched in low complexity. The segment covering 603 to 617 (RGRSSKATSSTSRNM) has biased composition (polar residues). Serine 618, serine 640, and serine 648 each carry phosphoserine. Positions 643-653 (IEVDDSDEDDI) are enriched in acidic residues. Over residues 655 to 679 (PTNSRADQRWSGTTSSKRMSQSQTA) the composition is skewed to polar residues. An N6-lactoyllysine modification is found at lysine 671. A phosphoserine mark is found at serine 674, serine 676, serine 686, and serine 699. Over residues 684–694 (FESDEDDDDDP) the composition is skewed to acidic residues.

The protein belongs to the MRE11/RAD32 family. As to quaternary structure, component of the MRN complex composed of two heterodimers RAD50 and MRE11 associated with a single NBN. The MRN complexes dimerize on DNA to form joined MRN-MRN oligomers required for DNA double-strand break repair. As part of the MRN complex, interacts with MCM9; the interaction recruits the complex to DNA repair sites. Component of the BASC complex, at least composed of BRCA1, MSH2, MSH6, MLH1, ATM, BLM, RAD50, MRE11 and NBN. Found in a complex with TERF2. Interacts with DCLRE1C/Artemis and DCLRE1B/Apollo. Interacts with ATF2. Interacts with EXD2. Interacts with MRNIP. Interacts with SAMHD1; leading to stimulate 3'-5' exonuclease activity. Interacts (when ubiquitinated) with UBQLN4 (via its UBA domain). Interacts with CYREN (via XLF motif). Interacts with GFI1; promoting methylation by PRMT1. Interacts with DYNLL1; inhibiting the activity of MRE11. Interacts with C1QBP and RAD50; interaction takes place in absence of DNA damage to form the MRC (MRE11-RAD50-C1QBP) complex that inhibits the activity of MRE11. Interacts with AGER/RAGE; AGER is recruited to DNA double-strand break sites where it enhances MRE11 endonuclease activity to promote DNA repair. The cofactor is Mn(2+). Phosphorylated by ATM at Ser-674 and Ser-676 in response to DNA damage, promoting MRE11 activity: phosphorylation activates MRE11 by preventing the interaction between MRE11 and the C1QBP inhibitor. Phosphorylation at Ser-648 by PLK1 primes for phosphorylation at Ser-686 by CK2, inhibiting recruitment of the MRN complex to DNA damage sites. In terms of processing, asymmetric dimethylation by PRMT1 promotes MRE11 exonuclease activity. Post-translationally, lactylation at Lys-671 by CREBBP/CBP in response to DNA damage promotes DNA binding and MRE11 activity. Acetylated on lysine residues by KAT2A /GCN5. In terms of processing, ubiquitinated following DNA damage. Ubiquitination triggers interaction with UBQLN4, leading to MRE11 removal from chromatin and degradation by the proteasome. Ubiquitinated at Lys-339 and Lys-481 by RNF126 via 'Lys-27'- and 'Lys-29'-linked polyubiquitin chains, promoting the exonuclease activity of MRE11. Post-translationally, SUMOylated by PIAS1, stabilizing MRE11 on chromatin during end resection. DeSUMOylated by SENP3 following removal from DNA double-strand breaks (DSBs). Ufmylation at Lys-282 promotes MRE11 activity and is required for activation of the ATM and ATR kinases by the MRN complex.

It localises to the nucleus. It is found in the chromosome. Its subcellular location is the telomere. Its activity is regulated as follows. Interaction with SAMHD1 stimulates the double-strand-specific 3'-5' exonuclease activity. RBBP8/CtIP specifically promotes the endonuclease activity to clear protein-DNA adducts and generate clean double-strand break ends. DYNLL1-binding inhibits the activity of MRE11. MRE11 activity is inhibited by C1QBP: in absence of DNA damage, C1QBP interacts with unphosphorylated MRE11, preventing formation and activity of the MRN complex. Functionally, core component of the MRN complex, which plays a central role in double-strand break (DSB) repair, DNA recombination, maintenance of telomere integrity and meiosis. The MRN complex is involved in the repair of DNA double-strand breaks (DSBs) via homologous recombination (HR), an error-free mechanism which primarily occurs during S and G2 phases. The complex (1) mediates the end resection of damaged DNA, which generates proper single-stranded DNA, a key initial steps in HR, and is (2) required for the recruitment of other repair factors and efficient activation of ATM and ATR upon DNA damage. Within the MRN complex, MRE11 possesses both single-strand endonuclease activity and double-strand-specific 3'-5' exonuclease activity. After DSBs, MRE11 is loaded onto DSBs sites and cleaves DNA by cooperating with RBBP8/CtIP to initiate end resection. MRE11 first endonucleolytically cleaves the 5' strand at DNA DSB ends to prevent non-homologous end joining (NHEJ) and licence HR. It then generates a single-stranded DNA gap via 3' to 5' exonucleolytic degradation to create entry sites for EXO1- and DNA2-mediated 5' to 3' long-range resection, which is required for single-strand invasion and recombination. RBBP8/CtIP specifically promotes the endonuclease activity of MRE11 to clear protein-DNA adducts and generate clean double-strand break ends. MRE11 endonuclease activity is also enhanced by AGER/RAGE. The MRN complex is also required for DNA damage signaling via activation of the ATM and ATR kinases: the nuclease activity of MRE11 is not required to activate ATM and ATR. The MRN complex is also required for the processing of R-loops. The MRN complex is involved in the activation of the cGAS-STING pathway induced by DNA damage during tumorigenesis: the MRN complex acts by displacing CGAS from nucleosome sequestration, thereby activating it. In telomeres the MRN complex may modulate t-loop formation. In Mus musculus (Mouse), this protein is Double-strand break repair protein MRE11.